The sequence spans 943 residues: Isoleucine--tRNA ligase (943 aa).

A 'HIGH' region motif is present at residues 59-69; sequence PYANGRIHLGH. Glu-577 is a binding site for L-isoleucyl-5'-AMP. Positions 618-622 match the 'KMSKS' region motif; the sequence is KMSKS. Residue Lys-621 coordinates ATP. Positions 906, 909, 926, and 929 each coordinate Zn(2+).

Belongs to the class-I aminoacyl-tRNA synthetase family. IleS type 1 subfamily. As to quaternary structure, monomer. Zn(2+) is required as a cofactor.

It is found in the cytoplasm. The enzyme catalyses tRNA(Ile) + L-isoleucine + ATP = L-isoleucyl-tRNA(Ile) + AMP + diphosphate. Its function is as follows. Catalyzes the attachment of isoleucine to tRNA(Ile). As IleRS can inadvertently accommodate and process structurally similar amino acids such as valine, to avoid such errors it has two additional distinct tRNA(Ile)-dependent editing activities. One activity is designated as 'pretransfer' editing and involves the hydrolysis of activated Val-AMP. The other activity is designated 'posttransfer' editing and involves deacylation of mischarged Val-tRNA(Ile). The sequence is that of Isoleucine--tRNA ligase from Stenotrophomonas maltophilia (strain R551-3).